A 308-amino-acid polypeptide reads, in one-letter code: Aspartate carbamoyltransferase catalytic subunit (308 aa).

The carbamoyl phosphate site is built by Arg55 and Thr56. L-aspartate is bound at residue Lys83. Residues Arg105, His133, and Gln136 each coordinate carbamoyl phosphate. 2 residues coordinate L-aspartate: Arg166 and Arg223. Gly264 and Pro265 together coordinate carbamoyl phosphate.

This sequence belongs to the aspartate/ornithine carbamoyltransferase superfamily. ATCase family. Heterododecamer (2C3:3R2) of six catalytic PyrB chains organized as two trimers (C3), and six regulatory PyrI chains organized as three dimers (R2).

The catalysed reaction is carbamoyl phosphate + L-aspartate = N-carbamoyl-L-aspartate + phosphate + H(+). It functions in the pathway pyrimidine metabolism; UMP biosynthesis via de novo pathway; (S)-dihydroorotate from bicarbonate: step 2/3. Catalyzes the condensation of carbamoyl phosphate and aspartate to form carbamoyl aspartate and inorganic phosphate, the committed step in the de novo pyrimidine nucleotide biosynthesis pathway. The sequence is that of Aspartate carbamoyltransferase catalytic subunit from Salinispora arenicola (strain CNS-205).